The sequence spans 38 residues: Humanin-like protein (38 aa).

In the testis, expressed in Leydig cells at 10, 20 and 60 days of age (at protein level). Also expressed in pachytene spermatocytes at day 20 and in vessels, peritubular cells and spermatids at day 60. Not detected in Sertoli cells (at protein level). In the adult ovary, expressed in stromal cells, granulosa cells, theca cells and oocytes at diestrus and proestrus (at protein level). Expressed in the anterior pituitary where it is detected in lactotropes and somatotropes with lower levels in females than males (at protein level). In the hippocampus, expressed in astrocytes but not in neurons or oligodendrocytes (at protein level). Expressed in muscle, liver and hypothalamus but not in epididymal fat (at protein level). Widely expressed with highest levels in cardiac and skeletal muscle and lowest levels in lung, testis and uterus. In the CNS, levels are relatively high in the cerebellum and cortex and low in the hippocampus. In the hippocampus, lower levels are detected in ovariectomized animals than in controls.

It localises to the mitochondrion. The protein localises to the secreted. The protein resides in the cytoplasm. Functionally, plays a role as a neuroprotective factor. Protects against neuronal cell death induced by amyloid-beta peptides. Also protects against excitotoxic cell death. Prevents amyloid-beta peptide-induced spatial learning and memory impairments, protects against amyloid-beta peptide-induced suppression of hippocampal long-term potentiation, and inhibits amyloid-beta peptide-induced activation of STAT3 and inhibition of CASP3. Prevents glutamate-induced dendritic atrophy in hippocampal neurons and also prevents glutamate-induced decrease in SYP puncta number and total puncta area. Protects anterior pituitary cells from TNF-induced apoptosis. Plays a role in ovarian follicle development by acting as a cryoprotective factor for granulosa cells in the antral follicle. Increases androgen production in Leydig cells and promotes Leydig cell survival by preventing apoptosis. This chain is Humanin-like protein, found in Rattus norvegicus (Rat).